We begin with the raw amino-acid sequence, 263 residues long: Antigen 10-3 (263 aa).

An N-terminal signal peptide occupies residues 1–21 (MNIYLIGILCIVGLIISQGST). A disordered region spans residues 70-207 (GNKKDKQPTQ…QINDGTSDKP (138 aa)). Over residues 78 to 90 (TQKTTPKPTTPKQ) the composition is skewed to low complexity. Repeat copies occupy residues 81 to 107 (TTPKPTTPKQINDGTSDKTSDTHTIKR), 108 to 134 (TTPKPTTPKQINDGTSDKTSDTHTIKR), 135 to 161 (TTPKPTTPKQINDGTSDKTSDTHTIKR), 162 to 188 (TTPKPTTPKQINDGTSDKTSDTHTIKR), and 189 to 206 (TTPKPTTPKQINDGTSDK). The 5 X 27 AA tandem repeats stretch occupies residues 81 to 189 (TTPKPTTPKQ…TSDTHTIKRT (109 aa)). 4 stretches are compositionally biased toward basic and acidic residues: residues 95–104 (TSDKTSDTHT), 122–131 (TSDKTSDTHT), 149–158 (TSDKTSDTHT), and 176–185 (TSDKTSDTHT).

This chain is Antigen 10-3, found in Schistosoma mansoni (Blood fluke).